The following is a 223-amino-acid chain: Chalcone--flavanone isomerase (223 aa).

The substrate site is built by Thr-50, Asn-114, and Thr-191.

This sequence belongs to the chalcone isomerase family.

It carries out the reaction a chalcone = a flavanone.. It functions in the pathway secondary metabolite biosynthesis; flavonoid biosynthesis. Catalyzes the intramolecular cyclization of bicyclic chalcones into tricyclic (S)-flavanones. Responsible for the isomerization of 4,2',4',6'-tetrahydroxychalcone (also termed chalcone) into naringenin. The chain is Chalcone--flavanone isomerase (CHI) from Pisum sativum (Garden pea).